A 191-amino-acid polypeptide reads, in one-letter code: NADH-quinone oxidoreductase subunit B 2 (191 aa).

Cys69, Cys70, Cys134, and Cys164 together coordinate [4Fe-4S] cluster.

The protein belongs to the complex I 20 kDa subunit family. NDH-1 is composed of 14 different subunits. Subunits NuoB, C, D, E, F, and G constitute the peripheral sector of the complex. It depends on [4Fe-4S] cluster as a cofactor.

It localises to the cell inner membrane. It carries out the reaction a quinone + NADH + 5 H(+)(in) = a quinol + NAD(+) + 4 H(+)(out). NDH-1 shuttles electrons from NADH, via FMN and iron-sulfur (Fe-S) centers, to quinones in the respiratory chain. Couples the redox reaction to proton translocation (for every two electrons transferred, four hydrogen ions are translocated across the cytoplasmic membrane), and thus conserves the redox energy in a proton gradient. This Gluconacetobacter diazotrophicus (strain ATCC 49037 / DSM 5601 / CCUG 37298 / CIP 103539 / LMG 7603 / PAl5) protein is NADH-quinone oxidoreductase subunit B 2.